Reading from the N-terminus, the 404-residue chain is Cysteine desulfurase IscS (404 aa).

Pyridoxal 5'-phosphate-binding positions include 75–76, asparagine 155, glutamine 183, and 203–205; these read AT and SGH. Residue lysine 206 is modified to N6-(pyridoxal phosphate)lysine. Residue threonine 243 participates in pyridoxal 5'-phosphate binding. The active-site Cysteine persulfide intermediate is the cysteine 328. Cysteine 328 lines the [2Fe-2S] cluster pocket.

It belongs to the class-V pyridoxal-phosphate-dependent aminotransferase family. NifS/IscS subfamily. As to quaternary structure, homodimer. Forms a heterotetramer with IscU, interacts with other sulfur acceptors. The cofactor is pyridoxal 5'-phosphate.

It is found in the cytoplasm. The enzyme catalyses (sulfur carrier)-H + L-cysteine = (sulfur carrier)-SH + L-alanine. It functions in the pathway cofactor biosynthesis; iron-sulfur cluster biosynthesis. In terms of biological role, master enzyme that delivers sulfur to a number of partners involved in Fe-S cluster assembly, tRNA modification or cofactor biosynthesis. Catalyzes the removal of elemental sulfur atoms from cysteine to produce alanine. Functions as a sulfur delivery protein for Fe-S cluster synthesis onto IscU, an Fe-S scaffold assembly protein, as well as other S acceptor proteins. In Shewanella pealeana (strain ATCC 700345 / ANG-SQ1), this protein is Cysteine desulfurase IscS.